The following is a 591-amino-acid chain: Aspartate--tRNA ligase (591 aa).

Position 173 (Glu-173) interacts with L-aspartate. The interval 197 to 200 (QLFK) is aspartate. Arg-219 lines the L-aspartate pocket. Residues 219-221 (RDE) and Gln-228 each bind ATP. An L-aspartate-binding site is contributed by His-448. Glu-482 lines the ATP pocket. Arg-489 contributes to the L-aspartate binding site. 534 to 537 (GLDR) is a binding site for ATP.

Belongs to the class-II aminoacyl-tRNA synthetase family. Type 1 subfamily. In terms of assembly, homodimer.

It is found in the cytoplasm. The catalysed reaction is tRNA(Asp) + L-aspartate + ATP = L-aspartyl-tRNA(Asp) + AMP + diphosphate. In terms of biological role, catalyzes the attachment of L-aspartate to tRNA(Asp) in a two-step reaction: L-aspartate is first activated by ATP to form Asp-AMP and then transferred to the acceptor end of tRNA(Asp). The sequence is that of Aspartate--tRNA ligase from Shewanella amazonensis (strain ATCC BAA-1098 / SB2B).